A 105-amino-acid polypeptide reads, in one-letter code: Large ribosomal subunit protein uL24 (105 aa).

Belongs to the universal ribosomal protein uL24 family. As to quaternary structure, part of the 50S ribosomal subunit.

Functionally, one of two assembly initiator proteins, it binds directly to the 5'-end of the 23S rRNA, where it nucleates assembly of the 50S subunit. Its function is as follows. One of the proteins that surrounds the polypeptide exit tunnel on the outside of the subunit. This is Large ribosomal subunit protein uL24 from Staphylococcus haemolyticus (strain JCSC1435).